A 301-amino-acid chain; its full sequence is GTPase Era (301 aa).

In terms of domain architecture, Era-type G spans 4–173 (KAGFVALIGK…LECISKYLSP (170 aa)). The interval 12-19 (GKPNAGKS) is G1. 12–19 (GKPNAGKS) contributes to the GTP binding site. Residues 38–42 (NATRK) are G2. Residues 64–67 (DTPG) form a G3 region. Residues 64 to 68 (DTPGL) and 122 to 125 (SKID) each bind GTP. The segment at 122–125 (SKID) is G4. The G5 stretch occupies residues 152-154 (LSA). A KH type-2 domain is found at 204 to 280 (LSDEIPYESD…FLNLQVIAQK (77 aa)).

Belongs to the TRAFAC class TrmE-Era-EngA-EngB-Septin-like GTPase superfamily. Era GTPase family. In terms of assembly, monomer.

Its subcellular location is the cytoplasm. The protein resides in the cell inner membrane. Its function is as follows. An essential GTPase that binds both GDP and GTP, with rapid nucleotide exchange. Plays a role in 16S rRNA processing and 30S ribosomal subunit biogenesis and possibly also in cell cycle regulation and energy metabolism. In Helicobacter pylori (strain G27), this protein is GTPase Era.